Here is a 464-residue protein sequence, read N- to C-terminus: 3-isopropylmalate dehydratase large subunit (464 aa).

[4Fe-4S] cluster contacts are provided by C337, C397, and C400.

Belongs to the aconitase/IPM isomerase family. LeuC type 1 subfamily. As to quaternary structure, heterodimer of LeuC and LeuD. The cofactor is [4Fe-4S] cluster.

The catalysed reaction is (2R,3S)-3-isopropylmalate = (2S)-2-isopropylmalate. It functions in the pathway amino-acid biosynthesis; L-leucine biosynthesis; L-leucine from 3-methyl-2-oxobutanoate: step 2/4. Catalyzes the isomerization between 2-isopropylmalate and 3-isopropylmalate, via the formation of 2-isopropylmaleate. The sequence is that of 3-isopropylmalate dehydratase large subunit from Bacillus cereus (strain ATCC 14579 / DSM 31 / CCUG 7414 / JCM 2152 / NBRC 15305 / NCIMB 9373 / NCTC 2599 / NRRL B-3711).